Reading from the N-terminus, the 267-residue chain is Probable proteasome subunit beta type-2 (267 aa).

Positions 1–35 (MMGINERKGFDFEYYQRNLLLQEKGFPTPKATSTG) are cleaved as a propeptide — removed in mature form. The active-site Nucleophile is the Thr36.

This sequence belongs to the peptidase T1B family. As to quaternary structure, the 26S proteasome consists of a 20S proteasome core and two 19S regulatory subunits. The 20S proteasome core is composed of 28 subunits that are arranged in four stacked rings, resulting in a barrel-shaped structure. The two end rings are each formed by seven alpha subunits, and the two central rings are each formed by seven beta subunits. The catalytic chamber with the active sites is on the inside of the barrel.

The protein resides in the cytoplasm. Its subcellular location is the nucleus. It catalyses the reaction Cleavage of peptide bonds with very broad specificity.. In terms of biological role, the proteasome is a multicatalytic proteinase complex which is characterized by its ability to cleave peptides with Arg, Phe, Tyr, Leu, and Glu adjacent to the leaving group at neutral or slightly basic pH. The proteasome has an ATP-dependent proteolytic activity (Potential). This is Probable proteasome subunit beta type-2 (pup1) from Schizosaccharomyces pombe (strain 972 / ATCC 24843) (Fission yeast).